The chain runs to 233 residues: 3-dehydroquinate dehydratase (233 aa).

3-dehydroquinate is bound by residues 34-36 (ELR) and arginine 64. The Proton donor/acceptor role is filled by histidine 118. Lysine 145 functions as the Schiff-base intermediate with substrate in the catalytic mechanism. Positions 185, 205, and 209 each coordinate 3-dehydroquinate.

This sequence belongs to the type-I 3-dehydroquinase family. In terms of assembly, homodimer.

It catalyses the reaction 3-dehydroquinate = 3-dehydroshikimate + H2O. It functions in the pathway metabolic intermediate biosynthesis; chorismate biosynthesis; chorismate from D-erythrose 4-phosphate and phosphoenolpyruvate: step 3/7. Involved in the third step of the chorismate pathway, which leads to the biosynthesis of aromatic amino acids. Catalyzes the cis-dehydration of 3-dehydroquinate (DHQ) and introduces the first double bond of the aromatic ring to yield 3-dehydroshikimate. The sequence is that of 3-dehydroquinate dehydratase from Coxiella burnetii (strain CbuG_Q212) (Coxiella burnetii (strain Q212)).